We begin with the raw amino-acid sequence, 209 residues long: Orotate phosphoribosyltransferase (209 aa).

5-phospho-alpha-D-ribose 1-diphosphate contacts are provided by residues Arg-96, Lys-100, His-102, and 122–130 (EDLISTGGS). Ser-126 serves as a coordination point for orotate.

Belongs to the purine/pyrimidine phosphoribosyltransferase family. PyrE subfamily. Homodimer. Requires Mg(2+) as cofactor.

It carries out the reaction orotidine 5'-phosphate + diphosphate = orotate + 5-phospho-alpha-D-ribose 1-diphosphate. It functions in the pathway pyrimidine metabolism; UMP biosynthesis via de novo pathway; UMP from orotate: step 1/2. Catalyzes the transfer of a ribosyl phosphate group from 5-phosphoribose 1-diphosphate to orotate, leading to the formation of orotidine monophosphate (OMP). In Streptococcus pyogenes serotype M3 (strain ATCC BAA-595 / MGAS315), this protein is Orotate phosphoribosyltransferase.